The following is a 180-amino-acid chain: Orotate phosphoribosyltransferase (180 aa).

5-phospho-alpha-D-ribose 1-diphosphate is bound by residues Arg-95, Lys-96, Lys-99, and 121 to 129; that span reads EDVTTTGGS. Positions 125 and 153 each coordinate orotate.

Belongs to the purine/pyrimidine phosphoribosyltransferase family. PyrE subfamily. In terms of assembly, homodimer. Mg(2+) is required as a cofactor.

It carries out the reaction orotidine 5'-phosphate + diphosphate = orotate + 5-phospho-alpha-D-ribose 1-diphosphate. The protein operates within pyrimidine metabolism; UMP biosynthesis via de novo pathway; UMP from orotate: step 1/2. Catalyzes the transfer of a ribosyl phosphate group from 5-phosphoribose 1-diphosphate to orotate, leading to the formation of orotidine monophosphate (OMP). This Methanothermobacter thermautotrophicus (strain ATCC 29096 / DSM 1053 / JCM 10044 / NBRC 100330 / Delta H) (Methanobacterium thermoautotrophicum) protein is Orotate phosphoribosyltransferase.